A 503-amino-acid chain; its full sequence is U6 snRNA (guanine-N(2))-methyltransferase THUMPD2 (503 aa).

The THUMP domain occupies 161 to 266 (CQLEKQIKEE…DIYSVVGIPV (106 aa)).

The protein belongs to the methyltransferase superfamily. In terms of assembly, part of the heterodimeric THUMPD2-TRM112 methyltransferase complex; this complex forms an active tRNA methyltransferase, where TRMT112 acts as an activator of the catalytic subunit THUMPD2. As to expression, expressed in a variety of tissues including brain, colon, gingiva, heart, kidney, liver, lung, placenta, small intestine, spleen and thymus.

The protein resides in the nucleus. It carries out the reaction guanosine in U6 snRNA + S-adenosyl-L-methionine = N(2)-methylguanosine in U6 snRNA + S-adenosyl-L-homocysteine + H(+). In terms of biological role, catalytic subunit of the THUMPD2-TRM112 methyltransferase complex, that specifically mediates the S-adenosyl-L-methionine-dependent N(2)-methylation of guanosine nucleotides, most probably at position 72 (m2G72), in the U6snRNA of the major spliceosome. This modification in the U6 snRNA affects the constitutive splicing efficiency of introns that have suboptimal splice sites and can impact final mRNA levels. This chain is U6 snRNA (guanine-N(2))-methyltransferase THUMPD2, found in Homo sapiens (Human).